The sequence spans 821 residues: Putative outer membrane usher protein YqiG (821 aa).

Positions 1–20 are cleaved as a signal peptide; sequence MSGNIGANPVIIIGCASAYA. A disulfide bridge links Cys798 with Cys817.

Belongs to the fimbrial export usher family.

The protein resides in the cell outer membrane. In terms of biological role, may be involved in H(2) production during fermentative growth. Involved in the export and assembly of a fimbrial subunit across the outer membrane. This chain is Putative outer membrane usher protein YqiG (yqiG), found in Escherichia coli (strain K12).